The chain runs to 375 residues: MKVWLLLGLLLVHEALEDVTGQHLPKNKRPKEPGENRIKPTNKKVKPKIPKIKDRDSADSTPKTQSIMMQVLDKGRFQKPAATLSLLAGQSVELRCKGSRIGWSYPAYLDTFKDSRISVKQNERYGQLTLVNSTSADTGEFSCWGQLCSGYICRKDETKTGSTYIFFTEKGELFVPSPSYFDVVYLNPDRQAVVPCRVTVLSAKVTLHREFPAKEIPANGTDIVYDMKRGFVYLQPHSEHQGVVYCRAEAGGRSQISVKYQLLYVAVPSGPPSTTILASSNKVKSGDDVSVLCTVLGEPDVEVEFTWIFPGQKDERPVTIQDTWRLIHRGLGHTTRLSQSVITVEDFETIDAGYYICTAQNLQGQTTVATTVEFS.

The N-terminal stretch at 1-21 (MKVWLLLGLLLVHEALEDVTG) is a signal peptide. Residues 22–64 (QHLPKNKRPKEPGENRIKPTNKKVKPKIPKIKDRDSADSTPKT) are disordered. Over residues 40–50 (PTNKKVKPKIP) the composition is skewed to basic residues. The 98-residue stretch at 62–159 (PKTQSIMMQV…GYICRKDETK (98 aa)) folds into the Ig-like C2-type 1 domain. Residues Cys-96 and Cys-143 are joined by a disulfide bond. N-linked (GlcNAc...) asparagine glycosylation is found at Asn-132 and Asn-219. Residues 272–375 (PSTTILASSN…TTVATTVEFS (104 aa)) enclose the Ig-like C2-type 2 domain. An intrachain disulfide couples Cys-293 to Cys-357.

In terms of assembly, forms a complex composed of PDGFRL, TNK2 and GRB2.

The protein localises to the secreted. In Macaca fascicularis (Crab-eating macaque), this protein is Platelet-derived growth factor receptor-like protein (PDGFRL).